The sequence spans 514 residues: NAD(P)H-quinone oxidoreductase subunit 2 (514 aa).

14 helical membrane-spanning segments follow: residues 16-36 (IWPE…DLIV), 43-63 (WLPY…YFEW), 80-100 (LSIV…LMSV), 110-130 (LAEF…LSGA), 133-153 (LVMI…MTGY), 168-188 (LLIG…LYGL), 211-231 (LGLA…ISAV), 245-265 (PTPV…ALAI), 279-299 (WHFI…VVAL), 307-327 (MLAY…TANS), 335-355 (IFYL…IILF), 379-399 (LGLS…GFFG), 411-431 (GLYG…YYYI), and 467-487 (VGLV…NPLF).

Belongs to the complex I subunit 2 family. NDH-1 can be composed of about 15 different subunits; different subcomplexes with different compositions have been identified which probably have different functions.

It is found in the cellular thylakoid membrane. The enzyme catalyses a plastoquinone + NADH + (n+1) H(+)(in) = a plastoquinol + NAD(+) + n H(+)(out). The catalysed reaction is a plastoquinone + NADPH + (n+1) H(+)(in) = a plastoquinol + NADP(+) + n H(+)(out). NDH-1 shuttles electrons from an unknown electron donor, via FMN and iron-sulfur (Fe-S) centers, to quinones in the respiratory and/or the photosynthetic chain. The immediate electron acceptor for the enzyme in this species is believed to be plastoquinone. Couples the redox reaction to proton translocation, and thus conserves the redox energy in a proton gradient. Cyanobacterial NDH-1 also plays a role in inorganic carbon-concentration. This Gloeothece citriformis (strain PCC 7424) (Cyanothece sp. (strain PCC 7424)) protein is NAD(P)H-quinone oxidoreductase subunit 2.